A 318-amino-acid polypeptide reads, in one-letter code: Protein teg (318 aa).

The 176-residue stretch at 7–182 (ITFDGGGTLG…VATNTSTASI (176 aa)) folds into the PNPLA domain. The short motif at 11-16 (GGGTLG) is the GXGXXG element. Residues 42 to 46 (GNSIG) carry the GXSXG motif. Ser-44 (nucleophile) is an active-site residue. Residue Asp-169 is the Proton acceptor of the active site.

In terms of biological role, probable lipid hydrolase. This chain is Protein teg (teg), found in Priestia megaterium (strain ATCC 14581 / DSM 32 / CCUG 1817 / JCM 2506 / NBRC 15308 / NCIMB 9376 / NCTC 10342 / NRRL B-14308 / VKM B-512 / Ford 19) (Bacillus megaterium).